The primary structure comprises 136 residues: Nucleoside diphosphate kinase (136 aa).

ATP is bound by residues K10, F58, R86, T92, R104, and N114. Residue H117 is the Pros-phosphohistidine intermediate of the active site.

The protein belongs to the NDK family. As to quaternary structure, homotetramer. Requires Mg(2+) as cofactor.

Its subcellular location is the cytoplasm. It catalyses the reaction a 2'-deoxyribonucleoside 5'-diphosphate + ATP = a 2'-deoxyribonucleoside 5'-triphosphate + ADP. The catalysed reaction is a ribonucleoside 5'-diphosphate + ATP = a ribonucleoside 5'-triphosphate + ADP. Major role in the synthesis of nucleoside triphosphates other than ATP. The ATP gamma phosphate is transferred to the NDP beta phosphate via a ping-pong mechanism, using a phosphorylated active-site intermediate. The sequence is that of Nucleoside diphosphate kinase from Corynebacterium jeikeium (strain K411).